A 583-amino-acid chain; its full sequence is Peptidyl-prolyl cis-trans isomerase FKBP10 (583 aa).

An N-terminal signal peptide occupies residues 1-27; the sequence is MLRAGPPSHTLLRLPLLQLLLLLLVQA. PPIase FKBP-type domains lie at 63–151, 175–263, 287–375, and 400–487; these read GDFV…LDVW, SDFV…IDVH, GDFM…IDFH, and GDFV…VSRE. 3 N-linked (GlcNAc...) asparagine glycosylation sites follow: N71, N183, and N295. EF-hand domains are found at residues 498 to 533 and 543 to 578; these read WHED…QVSE and DPEK…DQDR. The Ca(2+) site is built by D511, N513, D515, E517, E522, D556, N558, D560, K562, and E567. Residues 534–583 form a disordered region; it reads GKGRLLPGQDPEKTIGDMFQNQDRNQDGKITAEELKLKSDEDQDRVHEEL. Basic and acidic residues predominate over residues 557-583; the sequence is RNQDGKITAEELKLKSDEDQDRVHEEL. The Prevents secretion from ER signature appears at 580 to 583; that stretch reads HEEL.

In terms of processing, glycosylated and phosphorylated.

The protein resides in the endoplasmic reticulum lumen. The enzyme catalyses [protein]-peptidylproline (omega=180) = [protein]-peptidylproline (omega=0). Inhibited by both FK506 and rapamycin, but not by cyclosporin A. Functionally, PPIases accelerate the folding of proteins during protein synthesis. The protein is Peptidyl-prolyl cis-trans isomerase FKBP10 (FKBP10) of Bos taurus (Bovine).